We begin with the raw amino-acid sequence, 299 residues long: uncharacterized protein (299 aa).

The interval 1 to 38 (MSLDSNSDTEFELVPKFQTQPTRGDAPKSPELEEVSTV) is disordered.

This sequence belongs to the calycin superfamily. Fatty-acid binding protein (FABP) family.

This is an uncharacterized protein from Caenorhabditis elegans.